Here is a 63-residue protein sequence, read N- to C-terminus: Conotoxin TeAr193 (63 aa).

The N-terminal stretch at Met-1 to Ala-22 is a signal peptide. Positions Gln-23–Ser-48 are excised as a propeptide.

The protein belongs to the conotoxin T superfamily. Contains 2 disulfide bonds that can be either 'C1-C3, C2-C4' or 'C1-C4, C2-C3', since these disulfide connectivities have been observed for conotoxins with cysteine framework V (for examples, see AC P0DQQ7 and AC P81755). As to expression, expressed by the venom duct.

It is found in the secreted. This chain is Conotoxin TeAr193, found in Conus textile (Cloth-of-gold cone).